The primary structure comprises 418 residues: Voltage-gated ClC-type chloride channel ClcB (418 aa).

Transmembrane regions (helical) follow at residues 5 to 25, 54 to 74, 146 to 166, 168 to 188, 222 to 242, 258 to 278, 291 to 311, 316 to 336, 352 to 372, and 380 to 400; these read LLIATVVGILAAFAVAGFRHA, LLTPALGGLAAGLLLMGWQKF, LWIACGAAAGMAAAYRAPLAG, LFIAEVLFGTMMLASLGPVII, ALIISTGVLAGLCGPLLLTLM, WQLALGGLIVGLLSLFTPAVW, APPLLMIIAGIFLCKLCAVLA, GAPGGVFTPTLFIGLAIGMLY, LLLGLTGMATLLAATTHAPIM, and MTGEYQLLPGLLIACVIASVI.

The protein belongs to the chloride channel (TC 2.A.49) family. ClcB subfamily.

The protein localises to the cell inner membrane. Functionally, probably acts as an electrical shunt for an outwardly-directed proton pump that is linked to amino acid decarboxylation, as part of the extreme acid resistance (XAR) response. This Escherichia coli (strain ATCC 8739 / DSM 1576 / NBRC 3972 / NCIMB 8545 / WDCM 00012 / Crooks) protein is Voltage-gated ClC-type chloride channel ClcB.